Here is a 312-residue protein sequence, read N- to C-terminus: MPRLSEPSPYVEFDRKQWRALRMSTPLALTEEELVGLRGLGEQIDLLEVEEVYLPLARLIHLQVAARQRLFAATAEFLGEPQQNPDRPVPFVIGVAGSVAVGKSTTARVLQALLARWDHHPRVDLVTTDGFLYPNAELDRRNLMHRKGFPESYNRRALMRFVTSVKSGSDYACAPVYSHLKYDIIPGAKHVVRHPDILILEGLNVLQTGPTLMVSDLFDFGIYVDARIEDIEQWYISRFLAMRSTAFADPESHFHHYAALNDTKAVAAAREIWRSINRPNLVENILPTRPRATLVLRKDADHSINRLRLRKL.

97–104 (GSVAVGKS) contributes to the ATP binding site.

It belongs to the prokaryotic pantothenate kinase family.

Its subcellular location is the cytoplasm. The enzyme catalyses (R)-pantothenate + ATP = (R)-4'-phosphopantothenate + ADP + H(+). The protein operates within cofactor biosynthesis; coenzyme A biosynthesis; CoA from (R)-pantothenate: step 1/5. The protein is Pantothenate kinase of Mycolicibacterium paratuberculosis (strain ATCC BAA-968 / K-10) (Mycobacterium paratuberculosis).